A 193-amino-acid polypeptide reads, in one-letter code: NAD(P)H-quinone oxidoreductase subunit J (193 aa).

The disordered stretch occupies residues 1–21 (MSDSAPTNPTPTNPAPEESAS).

The protein belongs to the complex I 30 kDa subunit family. In terms of assembly, NDH-1 can be composed of about 15 different subunits; different subcomplexes with different compositions have been identified which probably have different functions.

The protein resides in the cellular thylakoid membrane. The catalysed reaction is a plastoquinone + NADH + (n+1) H(+)(in) = a plastoquinol + NAD(+) + n H(+)(out). The enzyme catalyses a plastoquinone + NADPH + (n+1) H(+)(in) = a plastoquinol + NADP(+) + n H(+)(out). NDH-1 shuttles electrons from an unknown electron donor, via FMN and iron-sulfur (Fe-S) centers, to quinones in the respiratory and/or the photosynthetic chain. The immediate electron acceptor for the enzyme in this species is believed to be plastoquinone. Couples the redox reaction to proton translocation, and thus conserves the redox energy in a proton gradient. Cyanobacterial NDH-1 also plays a role in inorganic carbon-concentration. The polypeptide is NAD(P)H-quinone oxidoreductase subunit J (Synechococcus sp. (strain CC9902)).